A 217-amino-acid chain; its full sequence is Translation initiation factor IF-3 (217 aa).

The interval proline 179–alanine 217 is disordered.

This sequence belongs to the IF-3 family. In terms of assembly, monomer.

The protein localises to the cytoplasm. Functionally, IF-3 binds to the 30S ribosomal subunit and shifts the equilibrium between 70S ribosomes and their 50S and 30S subunits in favor of the free subunits, thus enhancing the availability of 30S subunits on which protein synthesis initiation begins. This Parasynechococcus marenigrum (strain WH8102) protein is Translation initiation factor IF-3.